The primary structure comprises 192 residues: MLKKTFAALALGTALLSAGQAMAAEYKIDKEGQHAFVDWKISHLGYSFIHGTFKDFDGNFTWDSAKPEASKISVDLKTASLWSNHAERDKHIASADFLDVKKYPEAKFVSTAVKSTGEKTADVTGDLTLHGVTKPVTFKATFNGEGKDPWGGERAGFNATTTLNLNDFGIKGPGATSQTLDLDISVEGVKQK.

An N-terminal signal peptide occupies residues 1 to 23 (MLKKTFAALALGTALLSAGQAMA).

It belongs to the UPF0312 family. Type 1 subfamily.

It is found in the periplasm. This Pseudomonas putida (strain W619) protein is UPF0312 protein PputW619_0484.